Here is a 65-residue protein sequence, read N- to C-terminus: Disintegrin CC8A (65 aa).

Residues 1-65 (MNSAHPCCDP…SDCPRNRIKK (65 aa)) enclose the Disintegrin domain. Disulfide bonds link Cys-7-Cys-30, Cys-21-Cys-27, Cys-26-Cys-51, and Cys-39-Cys-58. The Cell attachment site signature appears at 43 to 45 (RGD).

The protein belongs to the disintegrin family. Dimeric disintegrin subfamily. Heterodimer with CC8B; disulfide-linked. As to expression, expressed by the venom gland.

It localises to the secreted. Inhibits integrins alpha-IIb/beta-3 (ITGA2B/ITGB3), alpha-V/beta-3 (ITGAV/ITGB3), and alpha-5/beta-1 (ITGA5/ITGB1). This Cerastes cerastes (Horned desert viper) protein is Disintegrin CC8A.